The chain runs to 253 residues: tRNA uridine(34) hydroxylase (253 aa).

The Rhodanese domain maps to 127 to 221 (HGRPLVLLDT…YFEDVGGEGY (95 aa)). The active-site Cysteine persulfide intermediate is cysteine 181.

The protein belongs to the TrhO family.

It carries out the reaction uridine(34) in tRNA + AH2 + O2 = 5-hydroxyuridine(34) in tRNA + A + H2O. Functionally, catalyzes oxygen-dependent 5-hydroxyuridine (ho5U) modification at position 34 in tRNAs. The protein is tRNA uridine(34) hydroxylase of Xanthomonas campestris pv. campestris (strain 8004).